The primary structure comprises 322 residues: D-specific alpha-keto acid dehydrogenase (322 aa).

NAD(+) contacts are provided by residues 156-157 (QI), 229-231 (TGR), and aspartate 255. The active site involves arginine 231. Residue glutamate 260 is part of the active site. Histidine 292 (proton donor) is an active-site residue. 292–295 (HTAY) serves as a coordination point for NAD(+).

It belongs to the D-isomer specific 2-hydroxyacid dehydrogenase family.

It carries out the reaction a (2R)-2-hydroxycarboxylate + NADP(+) = a 2-oxocarboxylate + NADPH + H(+). It catalyses the reaction a (2R)-2-hydroxycarboxylate + NAD(+) = a 2-oxocarboxylate + NADH + H(+). The enzyme catalyses (R)-lactate + NADP(+) = pyruvate + NADPH + H(+). The catalysed reaction is (R)-lactate + NAD(+) = pyruvate + NADH + H(+). It carries out the reaction (2R)-hydroxybutanoate + NADP(+) = 2-oxobutanoate + NADPH + H(+). Its function is as follows. Required for high-level resistance to glycopeptide antibiotics. Catalyzes the reduction of 2-keto acids to 2-D-hydroxy acids, exhibiting highest catalytic efficiency with pyruvate and 2-oxobutanoate/alpha-ketobutyrate as substrates, producing D-lactate and (2R)-hydroxybutanoate, respectively. Together with D-alanine--D-lactate ligase VanA, gives rise to peptidoglycan precursors that terminate in the depsipeptide D-alanine-D-lactate rather than the dipeptide D-alanine-D-alanine thus preventing vancomycin binding. Shows a slight preference for NADPH over NADH as the electron donor. This chain is D-specific alpha-keto acid dehydrogenase, found in Enterococcus faecium (Streptococcus faecium).